A 314-amino-acid chain; its full sequence is MQDLLLAKVESAMQASQVSALAGQTATVTKVSAATNLATITPTAAGQAPIIVKLDATRQVVELQALVGKTVMVGKTPAAIGGIGNWIALTPVTGAKAAAAATGAGQLVMMKVEGTAAAVNLPALAGKSFTIAQPPVAAGTKAAGMLYLNPVGGGDLIAINVQNAATQTGGLVGKTFVVAPSPVIGGTTGKFLVLKPLTAGAGKAVGGGAIAAKFIPAAVTGTGGAAAVGAGSASSLLTAGAGTVTPITAAGTGSAMLSAKGLGLGLGLGLGAWGPFLLGAAGLAGAAALYVWARRRHGTPDLSDDALLAAAGEE.

The Cytoplasmic portion of the chain corresponds to 1–263 (MQDLLLAKVE…SAMLSAKGLG (263 aa)). The segment at 261–270 (GLGLGLGLGL) is GL repeat. Residues 264 to 284 (LGLGLGLGAWGPFLLGAAGLA) traverse the membrane as a helical segment. Residues 285-314 (GAAALYVWARRRHGTPDLSDDALLAAAGEE) are Lumenal-facing. The segment at 298–314 (GTPDLSDDALLAAAGEE) is magnetite-interacting component (MIC), binds Fe(2+).

The protein belongs to the magnetosome MamD/Mms5 family. Seen in gels as a band of about 7 kDa, suggesting it may undergo cleavage. Upon overexpression a larger (full-length) protein is seen in the cell inner membrane.

Its subcellular location is the magnetosome membrane. In terms of biological role, helps regulate magnetite crystal morphology, probably in a single growth axis. May help control oxido-reduction reactions surrounding the crystal lattice of the forming magnetite mineral. Probably binds Fe(2+), may play a role in nucleation of magnetite crystal formation. Expression in a deletion mutant restores growth of spherical (wild-type) magnetite crystals. Increased protein levels allow crystal growth in the minor axis but not increased numbers of crystals. The polypeptide is Magnetosome protein MamD (mamD) (Paramagnetospirillum magneticum (strain ATCC 700264 / AMB-1) (Magnetospirillum magneticum)).